Here is a 381-residue protein sequence, read N- to C-terminus: L-lactate dehydrogenase (381 aa).

Residues 1 to 380 form the FMN hydroxy acid dehydrogenase domain; the sequence is MIISASTDYR…SRDSLVRELG (380 aa). Tyr-24 serves as a coordination point for substrate. Residues Ser-106 and Gln-127 each coordinate FMN. Tyr-129 is a binding site for substrate. Position 155 (Thr-155) interacts with FMN. Arg-164 provides a ligand contact to substrate. FMN is bound at residue Lys-251. Residue His-275 is the Proton acceptor of the active site. Arg-278 is a substrate binding site. An FMN-binding site is contributed by 306–330; it reads DSGIRSGLDVVRMIALGADTVLIGR.

This sequence belongs to the FMN-dependent alpha-hydroxy acid dehydrogenase family. Homotetramer. It depends on FMN as a cofactor.

It is found in the cell inner membrane. The enzyme catalyses (S)-lactate + A = pyruvate + AH2. Catalyzes the conversion of L-lactate to pyruvate. Is coupled to the respiratory chain. The protein is L-lactate dehydrogenase of Pseudomonas putida (strain W619).